Reading from the N-terminus, the 509-residue chain is Anaerobic nitric oxide reductase flavorubredoxin (509 aa).

Residues 30 to 210 are zinc metallo-hydrolase; that stretch reads LQGSSYNSYL…PFSRLVTAKI (181 aa). His79, Glu81, Asp83, His147, Asp166, and His227 together coordinate Fe cation. Positions 254–393 constitute a Flavodoxin-like domain; that stretch reads ITLFYDTMSN…VCREHGREIA (140 aa). Residues 260 to 264 and 342 to 369 contribute to the FMN site; these read TMSNN and AFGS…ETTL. The Rubredoxin-like domain maps to 457–508; it reads SGCMQCSVCQWIYDPALGEPMQDVTPGTMWSDVPDSFLCPECGLGKDVFNPI. 4 residues coordinate Fe cation: Cys462, Cys465, Cys495, and Cys498.

In the N-terminal section; belongs to the zinc metallo-hydrolase group 3 family. As to quaternary structure, homotetramer. It depends on Fe cation as a cofactor. FMN serves as cofactor.

It is found in the cytoplasm. It participates in nitrogen metabolism; nitric oxide reduction. Functionally, anaerobic nitric oxide reductase; uses NADH to detoxify nitric oxide (NO), protecting several 4Fe-4S NO-sensitive enzymes. Has at least 2 reductase partners, only one of which (NorW, flavorubredoxin reductase) has been identified. NO probably binds to the di-iron center; electrons enter from the NorW at rubredoxin and are transferred sequentially to the FMN center and the di-iron center. Also able to function as an aerobic oxygen reductase. This Pectobacterium atrosepticum (strain SCRI 1043 / ATCC BAA-672) (Erwinia carotovora subsp. atroseptica) protein is Anaerobic nitric oxide reductase flavorubredoxin.